Here is a 246-residue protein sequence, read N- to C-terminus: tRNA (guanine-N(7)-)-methyltransferase (246 aa).

The tract at residues 1 to 26 is disordered; the sequence is MSDSSSSSENAPATPESPGRPPRGIK. S-adenosyl-L-methionine-binding residues include Glu-74, Glu-99, Asp-126, and Asp-149. Asp-149 is an active-site residue. Residues Lys-153, Asp-185, and 224 to 227 each bind substrate; that span reads TKFE.

Belongs to the class I-like SAM-binding methyltransferase superfamily. TrmB family.

It carries out the reaction guanosine(46) in tRNA + S-adenosyl-L-methionine = N(7)-methylguanosine(46) in tRNA + S-adenosyl-L-homocysteine. Its pathway is tRNA modification; N(7)-methylguanine-tRNA biosynthesis. Its function is as follows. Catalyzes the formation of N(7)-methylguanine at position 46 (m7G46) in tRNA. In Chromohalobacter salexigens (strain ATCC BAA-138 / DSM 3043 / CIP 106854 / NCIMB 13768 / 1H11), this protein is tRNA (guanine-N(7)-)-methyltransferase.